The sequence spans 397 residues: Lysophospholipid transporter LplT (397 aa).

Transmembrane regions (helical) follow at residues 16 to 36, 53 to 73, 91 to 111, 139 to 159, 164 to 184, 229 to 249, 257 to 277, 282 to 302, 304 to 324, 344 to 364, and 372 to 392; these read MMAV…LLFA, VLQM…GQVA, LGAV…LVGV, LMES…GMLA, GAAL…NLLI, WGAG…ALGI, YLNA…AKLV, VSRC…FSLQ, AALP…FFVV, IAVQ…LYSL, and VVGI…GLWL.

It belongs to the major facilitator superfamily. LplT (TC 2.A.1.42) family.

The protein localises to the cell inner membrane. Its function is as follows. Catalyzes the facilitated diffusion of 2-acyl-glycero-3-phosphoethanolamine (2-acyl-GPE) into the cell. The sequence is that of Lysophospholipid transporter LplT from Cronobacter sakazakii (strain ATCC BAA-894) (Enterobacter sakazakii).